Consider the following 527-residue polypeptide: Bifunctional purine biosynthesis protein PurH (527 aa).

The MGS-like domain occupies 1 to 149 (MTADLLPVRR…KNFARVAVAT (149 aa)).

This sequence belongs to the PurH family.

The catalysed reaction is (6R)-10-formyltetrahydrofolate + 5-amino-1-(5-phospho-beta-D-ribosyl)imidazole-4-carboxamide = 5-formamido-1-(5-phospho-D-ribosyl)imidazole-4-carboxamide + (6S)-5,6,7,8-tetrahydrofolate. The enzyme catalyses IMP + H2O = 5-formamido-1-(5-phospho-D-ribosyl)imidazole-4-carboxamide. It participates in purine metabolism; IMP biosynthesis via de novo pathway; 5-formamido-1-(5-phospho-D-ribosyl)imidazole-4-carboxamide from 5-amino-1-(5-phospho-D-ribosyl)imidazole-4-carboxamide (10-formyl THF route): step 1/1. Its pathway is purine metabolism; IMP biosynthesis via de novo pathway; IMP from 5-formamido-1-(5-phospho-D-ribosyl)imidazole-4-carboxamide: step 1/1. The sequence is that of Bifunctional purine biosynthesis protein PurH from Stenotrophomonas maltophilia (strain R551-3).